Consider the following 1331-residue polypeptide: Xanthine dehydrogenase/oxidase (1331 aa).

Residues 4–91 (DELVFFVNGK…HVAVTTVEGI (88 aa)) enclose the 2Fe-2S ferredoxin-type domain. Cys43, Cys48, Cys51, Cys73, Cys112, Cys115, Cys147, and Cys149 together coordinate [2Fe-2S] cluster. One can recognise an FAD-binding PCMH-type domain in the interval 228–413 (FEGERVTWIQ…LSIEIPYSKE (186 aa)). FAD-binding positions include 256–263 (LVVGNTEI), Phe336, 346–350 (SIGGN), Asp359, Leu403, and Lys421. Cys535 and Cys992 are oxidised to a cystine. Mo-molybdopterin-binding residues include Gln767 and Phe798. Glu802 and Arg880 together coordinate substrate. Mo-molybdopterin is bound at residue Arg912. Phe914 and Thr1010 together coordinate substrate. Position 1079 (Ala1079) interacts with Mo-molybdopterin. Catalysis depends on Glu1261, which acts as the Proton acceptor.

It belongs to the xanthine dehydrogenase family. Homodimer. Interacts with BTN1A1. The cofactor is [2Fe-2S] cluster. FAD serves as cofactor. Mo-molybdopterin is required as a cofactor. In terms of processing, subject to partial proteolysis; this alters the enzyme from the dehydrogenase form (D) to the oxidase form (O). Contains sulfhydryl groups that are easily oxidized (in vitro); this alters the enzyme from the dehydrogenase form (D) to the oxidase form (O).

Its subcellular location is the peroxisome. The protein localises to the cytoplasm. It localises to the secreted. It carries out the reaction xanthine + NAD(+) + H2O = urate + NADH + H(+). The enzyme catalyses hypoxanthine + NAD(+) + H2O = xanthine + NADH + H(+). The catalysed reaction is xanthine + O2 + H2O = urate + H2O2. Its activity is regulated as follows. Can be converted from the dehydrogenase form (D) to the oxidase form (O) irreversibly by proteolysis or reversibly through the oxidation of sulfhydryl groups. Functionally, key enzyme in purine degradation. Catalyzes the oxidation of hypoxanthine to xanthine. Catalyzes the oxidation of xanthine to uric acid. Contributes to the generation of reactive oxygen species. The protein is Xanthine dehydrogenase/oxidase (Xdh) of Rattus norvegicus (Rat).